Reading from the N-terminus, the 386-residue chain is Acetylornithine aminotransferase (386 aa).

Pyridoxal 5'-phosphate is bound by residues 94 to 95 (GT) and phenylalanine 121. N(2)-acetyl-L-ornithine is bound at residue arginine 124. 206-209 (DEVQ) provides a ligand contact to pyridoxal 5'-phosphate. Residue lysine 235 is modified to N6-(pyridoxal phosphate)lysine. Residue serine 263 coordinates N(2)-acetyl-L-ornithine. Position 264 (threonine 264) interacts with pyridoxal 5'-phosphate.

Belongs to the class-III pyridoxal-phosphate-dependent aminotransferase family. ArgD subfamily. Homodimer. Requires pyridoxal 5'-phosphate as cofactor.

It is found in the cytoplasm. The enzyme catalyses N(2)-acetyl-L-ornithine + 2-oxoglutarate = N-acetyl-L-glutamate 5-semialdehyde + L-glutamate. The protein operates within amino-acid biosynthesis; L-arginine biosynthesis; N(2)-acetyl-L-ornithine from L-glutamate: step 4/4. This Listeria monocytogenes serotype 4b (strain F2365) protein is Acetylornithine aminotransferase.